Consider the following 248-residue polypeptide: MLYLHDVWVNWFEGEENGYNVCHFYEWRKDDTIELLDQVPLLKVDATLYHYIENELLELPQKMLEDVHHKAYIRKNHERLQQEYCFVVTDGKGIIAIDTIGYNVPIRKSRLIPRQEQMVYEMVENVQAEKYEFQVEETEKEHHILSPSPFIMNGLTRKERQLKQLLFMALDQLHTTKNTAEIRYWFTEWDPSAYGMVQHMEFEDIWAKLYDEAKTGWSDKHEQLCERLVKGQPFFEKLWEMENEQKVN.

This sequence belongs to the UPF0736 family.

This is UPF0736 protein BCB4264_A1231 from Bacillus cereus (strain B4264).